A 143-amino-acid chain; its full sequence is Transcriptional regulator MraZ (143 aa).

SpoVT-AbrB domains lie at 5–47 (TYTP…PREE) and 76–119 (TDEQ…DAQA).

It belongs to the MraZ family. In terms of assembly, forms oligomers.

It is found in the cytoplasm. Its subcellular location is the nucleoid. This chain is Transcriptional regulator MraZ, found in Rhodococcus opacus (strain B4).